The following is a 529-amino-acid chain: Peptide chain release factor 3 (529 aa).

Residues 11–280 form the tr-type G domain; sequence SKRRTFAIIS…GLVAWAPAPM (270 aa). GTP-binding positions include 20–27, 88–92, and 142–145; these read SHPDAGKT, DTPGH, and NKLD.

The protein belongs to the TRAFAC class translation factor GTPase superfamily. Classic translation factor GTPase family. PrfC subfamily.

It localises to the cytoplasm. Functionally, increases the formation of ribosomal termination complexes and stimulates activities of RF-1 and RF-2. It binds guanine nucleotides and has strong preference for UGA stop codons. It may interact directly with the ribosome. The stimulation of RF-1 and RF-2 is significantly reduced by GTP and GDP, but not by GMP. The polypeptide is Peptide chain release factor 3 (Pectobacterium carotovorum subsp. carotovorum (strain PC1)).